The sequence spans 238 residues: Uridylate kinase (238 aa).

12–15 (KLSG) is an ATP binding site. G54 serves as a coordination point for UMP. 2 residues coordinate ATP: G55 and R59. Residues D74 and 135–142 (TGNPYFTT) each bind UMP. ATP contacts are provided by T162, N163, Y168, and D171.

This sequence belongs to the UMP kinase family. As to quaternary structure, homohexamer.

Its subcellular location is the cytoplasm. The catalysed reaction is UMP + ATP = UDP + ADP. Its pathway is pyrimidine metabolism; CTP biosynthesis via de novo pathway; UDP from UMP (UMPK route): step 1/1. Its activity is regulated as follows. Inhibited by UTP. Functionally, catalyzes the reversible phosphorylation of UMP to UDP. The sequence is that of Uridylate kinase from Bradyrhizobium sp. (strain ORS 278).